A 243-amino-acid chain; its full sequence is Adapter protein MecA (243 aa).

A disordered region spans residues 119-140 (NQVEDGQGIAHNPTKDTNDLDP).

Belongs to the MecA family. As to quaternary structure, homodimer.

Its function is as follows. Enables the recognition and targeting of unfolded and aggregated proteins to the ClpC protease or to other proteins involved in proteolysis. This is Adapter protein MecA from Lactiplantibacillus plantarum (strain ATCC BAA-793 / NCIMB 8826 / WCFS1) (Lactobacillus plantarum).